A 226-amino-acid chain; its full sequence is E3 ubiquitin-protein ligase RNF186 (226 aa).

The segment at 39 to 85 (CLVCREPYNCARSPKLLSCQHTFCAVCLKLLLYVQEDTWSIPCPLCR) adopts an RING-type zinc-finger fold. 2 consecutive transmembrane segments (helical) span residues 157–177 (HLLL…PGVI) and 179–199 (WVLA…CCHP).

In terms of assembly, interacts with BNIP1. Post-translationally, polyubiquitinated. 'Lys-29'-linked autoubiquitination leads to proteasomal degradation.

It localises to the endoplasmic reticulum membrane. The enzyme catalyses S-ubiquitinyl-[E2 ubiquitin-conjugating enzyme]-L-cysteine + [acceptor protein]-L-lysine = [E2 ubiquitin-conjugating enzyme]-L-cysteine + N(6)-ubiquitinyl-[acceptor protein]-L-lysine.. It functions in the pathway protein modification; protein ubiquitination. In terms of biological role, E3 ubiquitin protein ligase that is part of an apoptotic signaling pathway activated by endoplasmic reticulum stress. Stimulates the expression of proteins specific of the unfolded protein response (UPR), ubiquitinates BNIP1 and regulates its localization to the mitochondrion and induces calcium release from the endoplasmic reticulum that ultimately leads to cell apoptosis. Plays a role in the maintenance of intestinal homeostasis and clearance of enteric pathogens. Upon NOD2 stimulation, ubiquitinates the ER stress sensor activating transcription factor 6/ATF6 and promotes the unfolded protein response UPR. Participates in basal level of autophagy maintenance by regulating the ubiquitination of EPHB2. Upon stimulation by ligand EFNB1, ubiquitinates EPHB2 and further recruits MAP1LC3B for autophagy induction. Controls nutrient sensing by ubiquitinating Sestrin-2/SESN2, which is an intracellular sensor of cytosolic leucine and inhibitor of mTORC1 activity. The chain is E3 ubiquitin-protein ligase RNF186 from Mus musculus (Mouse).